A 212-amino-acid polypeptide reads, in one-letter code: uncharacterized protein (212 aa).

Positions 97 to 151 (SDASEAKNDDRRSDGRFALYSVSDTPETTTASRSADRSTNPKTAKHPKSAAKPTV) are disordered. The segment covering 100-111 (SEAKNDDRRSDG) has biased composition (basic and acidic residues).

This is an uncharacterized protein from Mycobacterium tuberculosis (strain CDC 1551 / Oshkosh).